The following is a 1005-amino-acid chain: Myosin IE heavy chain (1005 aa).

Residues 8–693 (EGVPDFVLLN…TLFYFEEKRE (686 aa)) enclose the Myosin motor domain. 101-108 (GESGAGKT) serves as a coordination point for ATP. Residues 539–562 (SDPLVQGLFPPTRPEDSKKRPETA) form a disordered region. Positions 551 to 560 (RPEDSKKRPE) are enriched in basic and acidic residues. Residues 556 to 630 (KKRPETAGSQ…RAGFAGRIEY (75 aa)) are actin-binding. 2 IQ domains span residues 694–722 (LEMP…RKAA) and 716–745 (WNQR…HRAF). One can recognise a TH1 domain in the interval 810-1004 (KKKWDFRRHF…KGNQATIQFK (195 aa)).

Belongs to the TRAFAC class myosin-kinesin ATPase superfamily. Myosin family. As to quaternary structure, myosin I heavy chain is single-headed. Dimer of a heavy and a light chain. Inability to self-assemble into filaments.

Functionally, myosin is a protein that binds to actin and has ATPase activity that is activated by actin. May play a role in moving membranes relative to actin. This Dictyostelium discoideum (Social amoeba) protein is Myosin IE heavy chain (myoE).